The chain runs to 652 residues: MTQKDSPWLFRTYAGHSTAKASNALYRTNLAKGQTGLSVAFDLPTQTGYDSDDALARGEVGKVGVPICHLGDMRMLFDQIPLEQMNTSMTINATAPWLLALYIAVAEEQGADISKLQGTVQNDLMKEYLSRGTYICPPRPSLRMITDVAAYTRVHLPKWNPMNVCSYHLQEAGATPEQELAFALATGIAVLDDLRTKVPAEHFPAMVGRISFFVNAGIRFVTEMCKMRAFVDLWDEICRDRYGIEEEKYRRFRYGVQVNSLGLTEQQPENNVYRILIEMLAVTLSKKARARAVQLPAWNEALGLPRPWDQQWSLRMQQILAYESDLLEYEDLFDGNPAIERKVEALKDGAREELAHIEAMGGAIEAIDYMKARLVESNAERIARVETGETVVVGVNRWTSGAPSPLTTGDGAIMVADPEAERDQIARLEAWRAGRDGAAVAAALAELRRAATSGENVMPASIAAAKAGATTGEWAAELRRAFGEFRGPTGVARAPSNRTEGLDPIREAVQAVSARLGRPLKFVVGKPGLDGHSNGAEQIAARARDCGMDITYDGIRLTPAEIVAKAADERAHVLGLSILSGSHMPLVTEVLAEMRRAGLDVPLIVGGIIPEEDAAELRASGVAAVYTPKDFELNRIMMDIVGLVDRTALAAE.

The region spanning 519-647 (PLKFVVGKPG…MDIVGLVDRT (129 aa)) is the B12-binding domain. His532 contacts adenosylcob(III)alamin.

This sequence belongs to the methylmalonyl-CoA mutase family. As to quaternary structure, homodimer. Adenosylcob(III)alamin serves as cofactor.

The enzyme catalyses (2R)-ethylmalonyl-CoA = (2S)-methylsuccinyl-CoA. Radical enzyme that catalyzes the transformation of (2R)-ethylmalonyl-CoA to (2S)-methylsuccinyl-CoA. Is involved in the ethylmalonyl-CoA pathway for acetyl-CoA assimilation required for R.sphaeroides growth on acetate as sole carbon source. Is highly specific for its substrate, ethylmalonyl-CoA, and accepts methylmalonyl-CoA only at 0.2% relative activity. The sequence is that of Ethylmalonyl-CoA mutase from Cereibacter sphaeroides (strain ATCC 17023 / DSM 158 / JCM 6121 / CCUG 31486 / LMG 2827 / NBRC 12203 / NCIMB 8253 / ATH 2.4.1.) (Rhodobacter sphaeroides).